The primary structure comprises 429 residues: Ribosomal RNA small subunit methyltransferase B (429 aa).

Residues 254-260 (CAAPGGK), Asp277, Asp303, and Asp322 each bind S-adenosyl-L-methionine. The Nucleophile role is filled by Cys375.

The protein belongs to the class I-like SAM-binding methyltransferase superfamily. RsmB/NOP family.

Its subcellular location is the cytoplasm. It carries out the reaction cytidine(967) in 16S rRNA + S-adenosyl-L-methionine = 5-methylcytidine(967) in 16S rRNA + S-adenosyl-L-homocysteine + H(+). Its function is as follows. Specifically methylates the cytosine at position 967 (m5C967) of 16S rRNA. The chain is Ribosomal RNA small subunit methyltransferase B from Yersinia pseudotuberculosis serotype O:1b (strain IP 31758).